The chain runs to 477 residues: ETS translocation variant 1 (477 aa).

Position 94 is a phosphoserine (S94). Positions 128 to 178 (PQVGMRPSNPPTPSSTPVSPLHHASPNSAHTSKPDRAFPAHLPPSQPIQDS) are disordered. 2 positions are modified to phosphoserine; by RPS6KA1 and RPS6KA5: S191 and S216. Residue K317 forms a Glycyl lysine isopeptide (Lys-Gly) (interchain with G-Cter in SUMO2) linkage. The segment at residues 335-415 (LQLWQFLVAL…AGERYVYKFV (81 aa)) is a DNA-binding region (ETS).

The protein belongs to the ETS family. In terms of processing, sumoylated. Phosphorylated at Ser-191 and Ser-216 by RPS6KA1 and RPS6KA5; phosphorylation activates transcriptional activity.

Its subcellular location is the nucleus. Functionally, transcriptional activator that binds to DNA sequences containing the consensus pentanucleotide 5'-CGGA[AT]-3'. Required for olfactory dopaminergic neuron differentiation; may directly activate expression of tyrosine hydroxylase (TH). This is ETS translocation variant 1 (ETV1) from Bos taurus (Bovine).